The sequence spans 156 residues: ATP synthase subunit b (156 aa).

A helical transmembrane segment spans residues Ala11–Ala31.

It belongs to the ATPase B chain family. In terms of assembly, F-type ATPases have 2 components, F(1) - the catalytic core - and F(0) - the membrane proton channel. F(1) has five subunits: alpha(3), beta(3), gamma(1), delta(1), epsilon(1). F(0) has three main subunits: a(1), b(2) and c(10-14). The alpha and beta chains form an alternating ring which encloses part of the gamma chain. F(1) is attached to F(0) by a central stalk formed by the gamma and epsilon chains, while a peripheral stalk is formed by the delta and b chains.

The protein localises to the cell inner membrane. Its function is as follows. F(1)F(0) ATP synthase produces ATP from ADP in the presence of a proton or sodium gradient. F-type ATPases consist of two structural domains, F(1) containing the extramembraneous catalytic core and F(0) containing the membrane proton channel, linked together by a central stalk and a peripheral stalk. During catalysis, ATP synthesis in the catalytic domain of F(1) is coupled via a rotary mechanism of the central stalk subunits to proton translocation. Component of the F(0) channel, it forms part of the peripheral stalk, linking F(1) to F(0). This Klebsiella pneumoniae (strain 342) protein is ATP synthase subunit b.